The chain runs to 728 residues: Catalase-peroxidase (728 aa).

The tryptophyl-tyrosyl-methioninium (Trp-Tyr) (with M-244) cross-link spans 91-218 (WHSAGTYRTA…LAAVQMGLIY (128 aa)). His-92 (proton acceptor) is an active-site residue. Residues 218 to 244 (YVNPEGPDGTPDPVAAAHDIRETFARM) constitute a cross-link (tryptophyl-tyrosyl-methioninium (Tyr-Met) (with W-91)). A heme b-binding site is contributed by His-259.

Belongs to the peroxidase family. Peroxidase/catalase subfamily. Homodimer or homotetramer. The cofactor is heme b. Post-translationally, formation of the three residue Trp-Tyr-Met cross-link is important for the catalase, but not the peroxidase activity of the enzyme.

The catalysed reaction is H2O2 + AH2 = A + 2 H2O. The enzyme catalyses 2 H2O2 = O2 + 2 H2O. Functionally, bifunctional enzyme with both catalase and broad-spectrum peroxidase activity. The polypeptide is Catalase-peroxidase (Burkholderia lata (strain ATCC 17760 / DSM 23089 / LMG 22485 / NCIMB 9086 / R18194 / 383)).